We begin with the raw amino-acid sequence, 172 residues long: uncharacterized protein (172 aa).

Residues 1 to 22 (MKLFQLLLLVLTISSFIISNNG) form the signal peptide. Residues 23-140 (LVESHQGRMH…FSYENSSNET (118 aa)) are Extracellular-facing. The disordered stretch occupies residues 27–69 (HQGRMHRGSGERHHRAGGNQQQPQPPSEQQVESSYNSNDDGSS). A compositionally biased stretch (basic residues) spans 29-42 (GRMHRGSGERHHRA). Low complexity predominate over residues 53 to 69 (SEQQVESSYNSNDDGSS). Asn-135 and Asn-138 each carry an N-linked (GlcNAc...) asparagine glycan. The chain crosses the membrane as a helical span at residues 141 to 161 (IVIYINPVTLVFTLVLLLTFI). Over 162–172 (VLTITQSLRKY) the chain is Cytoplasmic.

Its subcellular location is the membrane. This is an uncharacterized protein from Dictyostelium discoideum (Social amoeba).